Here is a 513-residue protein sequence, read N- to C-terminus: GMP synthase [glutamine-hydrolyzing] (513 aa).

The region spanning 3–200 (SVTVLDFGSQ…LIDIAGIKPD (198 aa)) is the Glutamine amidotransferase type-1 domain. The active-site Nucleophile is C80. Catalysis depends on residues H174 and E176. One can recognise a GMPS ATP-PPase domain in the interval 201–388 (WSPKSFIGHQ…LGIAEDILMR (188 aa)). An ATP-binding site is contributed by 228-234 (SGGVDST).

As to quaternary structure, homodimer.

The catalysed reaction is XMP + L-glutamine + ATP + H2O = GMP + L-glutamate + AMP + diphosphate + 2 H(+). It participates in purine metabolism; GMP biosynthesis; GMP from XMP (L-Gln route): step 1/1. In terms of biological role, catalyzes the synthesis of GMP from XMP. The sequence is that of GMP synthase [glutamine-hydrolyzing] from Chlorobium phaeobacteroides (strain DSM 266 / SMG 266 / 2430).